The primary structure comprises 597 residues: MFRAQQNAFDDAVAKATDENLTSENWEYILDVCDKVAAEESGAKDAVAALIKRLAHRNANVQLYTLELGNALAQNCGPKIHRELASRSFTDALLRLANDRNTHQQVKAKILERMQEWTEMFASNPDFGIMEQAYMKLKTQNPNLQPPSKPGKREITEADRQKEEEELQMALALSIREKPSTAPHPQAESSASAAAAATTPTGAASAGQAQPAASQAVPSGTSAATVSRVRALFDFQPSEPGELQFRKGDVIAVLESVYKDWWKGSLRGQTGIFPLNYVEKLPDPTVEELQREAQMEAEVFGQIKNVEKLLTLLSTRSSEPNVQDNEEITALYHSTLAIRPKLIELIGKYSQKKDEFTQLNEKFIKARRDYEALLEASMSHPAQPQYGRPGQPQYPYPGPGAPMGYPPGGPQPDQRYFSPRPQGHMYPPTSQSPGPRNHTPPAAAPYQQAPSHPPAQPQQHTAPDAYPPQHHRPESTYDHPQELSTSVYDSPVEQRPPYPGAQIPAAIHQHFQQQQQQQQDYSPSVYSPDESKPPGTQQVPYPATPAANQPPPMHQPPPVPGAAAAPTPYPVNAPGASYQAYKPPQGGPASNPASFYQ.

One can recognise a VHS domain in the interval 16–145 (ATDENLTSEN…KLKTQNPNLQ (130 aa)). 2 disordered regions span residues 140 to 164 (QNPN…QKEE) and 178 to 218 (KPST…QAVP). Over residues 151 to 163 (GKREITEADRQKE) the composition is skewed to basic and acidic residues. The 20-residue stretch at 162 to 181 (KEEEELQMALALSIREKPST) folds into the UIM domain. Over residues 189 to 218 (SSASAAAAATTPTGAASAGQAQPAASQAVP) the composition is skewed to low complexity. In terms of domain architecture, SH3 spans 224–283 (ATVSRVRALFDFQPSEPGELQFRKGDVIAVLESVYKDWWKGSLRGQTGIFPLNYVEKLPD). The segment at 380–597 (HPAQPQYGRP…PASNPASFYQ (218 aa)) is disordered. The span at 381 to 391 (PAQPQYGRPGQ) shows a compositional bias: low complexity. The span at 392 to 410 (PQYPYPGPGAPMGYPPGGP) shows a compositional bias: pro residues. A compositionally biased stretch (low complexity) spans 440-450 (PPAAAPYQQAP). Residues 471–481 (HRPESTYDHPQ) are compositionally biased toward basic and acidic residues. A compositionally biased stretch (pro residues) spans 548-560 (NQPPPMHQPPPVP).

This sequence belongs to the STAM family. In terms of assembly, component of the ESCRT-0 complex composed of HSE1 and VPS27.

It localises to the endosome membrane. Functionally, component of the ESCRT-0 complex which is the sorting receptor for ubiquitinated cargo proteins at the multivesicular body (MVB). The protein is Class E vacuolar protein-sorting machinery protein hse1 (hse1) of Aspergillus terreus (strain NIH 2624 / FGSC A1156).